The following is a 309-amino-acid chain: Tagatose-6-phosphate kinase (309 aa).

It belongs to the carbohydrate kinase PfkB family. LacC subfamily.

The enzyme catalyses D-tagatofuranose 6-phosphate + ATP = D-tagatofuranose 1,6-bisphosphate + ADP + H(+). The protein operates within carbohydrate metabolism; D-tagatose 6-phosphate degradation; D-glyceraldehyde 3-phosphate and glycerone phosphate from D-tagatose 6-phosphate: step 1/2. The protein is Tagatose-6-phosphate kinase of Streptococcus pyogenes serotype M2 (strain MGAS10270).